Here is a 2525-residue protein sequence, read N- to C-terminus: Highly reducing polyketide synthase cm3B (2525 aa).

Residues 1–10 (MQSDTNNSPL) are compositionally biased toward polar residues. A disordered region spans residues 1 to 29 (MQSDTNNSPLSWEELRSGAASSDANSSPP). Residues 29–450 (PEPIAIIGMS…GTNAHVVVDA (422 aa)) enclose the Ketosynthase family 3 (KS3) domain. Catalysis depends on for beta-ketoacyl synthase activity residues Cys-202, His-336, and His-376. Residues 560–895 (VFSGQGSQYA…FLECLGALHV (336 aa)) form a malonyl-CoA:ACP transacylase (MAT) domain region. Residues 949 to 1087 (HELLGTFAHD…GLVHAETQAA (139 aa)) form an N-terminal hotdog fold region. Positions 949–1252 (HELLGTFAHD…AKGVHTTTLP (304 aa)) are dehydratase (DH) domain. A PKS/mFAS DH domain is found at 949-1257 (HELLGTFAHD…TTTLPGDTGL (309 aa)). The active-site Proton acceptor; for dehydratase activity is the His-981. Positions 1107 to 1257 (VHEVTPQKLY…TTTLPGDTGL (151 aa)) are C-terminal hotdog fold. Asp-1169 acts as the Proton donor; for dehydratase activity in catalysis. A methyltransferase (CMet) domain region spans residues 1399–1504 (LEVGAGTASA…KKLLKPGGKF (106 aa)). The enoyl reductase (ER) domain stretch occupies residues 1799–2111 (GLLESIRWKD…AGKHTGKIVL (313 aa)). The region spanning 2411–2489 (AQLLENISQL…ELAKIIAKES (79 aa)) is the Carrier domain. Residues 2411 to 2489 (AQLLENISQL…ELAKIIAKES (79 aa)) are ketoreductase (KR) domain. At Ser-2449 the chain carries O-(pantetheine 4'-phosphoryl)serine.

It functions in the pathway secondary metabolite biosynthesis. In terms of biological role, highly reducing polyketide synthase; part of the gene cluster that mediates the biosynthesis of beauveriolides I and III, cyclodepsipeptides acting as inhibitors of the acyl-CoA:cholesterol acyltransferase. The HR-PKS cm3B initiates the biosynthesis of beauveriolides by iteratively catalyzing the formation of the linear polyketide chain. The ATP-dependent acetyl-CoA ligase cm3D converts the polyketide carboxylic acid to a CoA thioester which id shuttled to the first T domain in the NRPS cm3A by the acetyltransferase cm3C. Cm3A contains 13 domains and assembles the polyketide chain, L-phenylalanine, L-alanine, and D-leucine (or D-allo-isoleucine) to form beauveriolide I (or beauveriolide III). The production of both beauveriolides I and III suggests the substrate adaptability of cm3B, using different amino acids as substrates. The protein is Highly reducing polyketide synthase cm3B of Cordyceps militaris (strain CM01) (Caterpillar fungus).